The following is a 110-amino-acid chain: UPF0060 membrane protein Dtpsy_1668 (110 aa).

A run of 4 helical transmembrane segments spans residues 7 to 27, 33 to 53, 63 to 83, and 86 to 106; these read LALFLLTAVAEIVGCYLPWLW, SAWLLVPAAASLALFAWLLTL, AAYGGVYVAVALVWLWTVDGV, and GPWDWLGVSVTLCGMAIIAFA.

It belongs to the UPF0060 family.

The protein resides in the cell inner membrane. The protein is UPF0060 membrane protein Dtpsy_1668 of Acidovorax ebreus (strain TPSY) (Diaphorobacter sp. (strain TPSY)).